The chain runs to 291 residues: Trimeric intracellular cation channel type B (291 aa).

At 1 to 16 (MEYPWDDLTLAFSRTS) the chain is on the lumenal side. A helical membrane pass occupies residues 17-33 (MFPFFDIAHYLVSVMAL). At 34–47 (KQRPGAVAAAWSNP) the chain is on the cytoplasmic side. A helical transmembrane segment spans residues 48-69 (LSSWLSAMLHCFGGGILSCILL). The Lumenal portion of the chain corresponds to 70–80 (AEPPLKFLTNH). Residues 81-99 (TNILLASSIWYIVFFCPRD) traverse the membrane as a helical segment. Residues 100–103 (LVSQ) lie on the Cytoplasmic side of the membrane. A helical membrane pass occupies residues 104–122 (GYSYQPIQLLAAGMKEVTR). A 1,2-diacyl-sn-glycero-3-phospho-(1D-myo-inositol-4,5-bisphosphate)-binding residues include Lys-118 and Arg-122. Residues 123-138 (TWKIVGGVAHANGYYR) lie on the Lumenal side of the membrane. A helical transmembrane segment spans residues 139-156 (NGWIVMIAVGWARGAGGA). The Cytoplasmic portion of the chain corresponds to 157–179 (IITACEQLLKGDWKPEGDEWLKM). A helical transmembrane segment spans residues 180–197 (SFPCKVTLLGSIMFTFQH). The Lumenal segment spans residues 198–206 (TRHLAISKH). The helical transmembrane segment at 207–225 (DLMFLYTIFLVTIKVTMMM) threads the bilayer. Over 226 to 291 (TKDAAVTLTP…SAKRHAKKED (66 aa)) the chain is Cytoplasmic. Residues 254–291 (LSEKKAEVKPSSNGSASSASKRGTEPPSSAKRHAKKED) are disordered. Residues 264–273 (SSNGSASSAS) are compositionally biased toward low complexity.

The protein belongs to the TMEM38 family. As to quaternary structure, homotrimer; conformation seems to be controled by binding to diacylglycerol (DAG).

Its subcellular location is the endoplasmic reticulum membrane. The enzyme catalyses K(+)(in) = K(+)(out). With respect to regulation, channel activity is activated by increased cytosolic Ca(2+) levels and blocked by luminal high Ca(2+) levels. Its function is as follows. Intracellular monovalent cation channel required for maintenance of rapid intracellular calcium release. Acts as a potassium counter-ion channel that functions in synchronization with calcium release from intracellular stores. Activated by increased cytosolic Ca(2+) levels. The protein is Trimeric intracellular cation channel type B (Tmem38b) of Rattus norvegicus (Rat).